A 265-amino-acid polypeptide reads, in one-letter code: Tryptophan synthase alpha chain (265 aa).

Active-site proton acceptor residues include Glu49 and Asp60.

Belongs to the TrpA family. As to quaternary structure, tetramer of two alpha and two beta chains.

It catalyses the reaction (1S,2R)-1-C-(indol-3-yl)glycerol 3-phosphate + L-serine = D-glyceraldehyde 3-phosphate + L-tryptophan + H2O. Its pathway is amino-acid biosynthesis; L-tryptophan biosynthesis; L-tryptophan from chorismate: step 5/5. Its function is as follows. The alpha subunit is responsible for the aldol cleavage of indoleglycerol phosphate to indole and glyceraldehyde 3-phosphate. The chain is Tryptophan synthase alpha chain from Desulfosudis oleivorans (strain DSM 6200 / JCM 39069 / Hxd3) (Desulfococcus oleovorans).